The chain runs to 193 residues: GTP cyclohydrolase 1 (193 aa).

Cys73, His76, and Cys144 together coordinate Zn(2+).

This sequence belongs to the GTP cyclohydrolase I family. As to quaternary structure, homomer.

It catalyses the reaction GTP + H2O = 7,8-dihydroneopterin 3'-triphosphate + formate + H(+). It functions in the pathway cofactor biosynthesis; 7,8-dihydroneopterin triphosphate biosynthesis; 7,8-dihydroneopterin triphosphate from GTP: step 1/1. This is GTP cyclohydrolase 1 from Hyperthermus butylicus (strain DSM 5456 / JCM 9403 / PLM1-5).